We begin with the raw amino-acid sequence, 269 residues long: Putative hydro-lyase Swoo_1731 (269 aa).

This sequence belongs to the D-glutamate cyclase family.

This is Putative hydro-lyase Swoo_1731 from Shewanella woodyi (strain ATCC 51908 / MS32).